Reading from the N-terminus, the 324-residue chain is Calpain-2 catalytic subunit (324 aa).

The tract at residues 1–138 (YPNTFWMNPQ…KKADYQVVDD (138 aa)) is domain III. Residues 139–153 (EIEADLEENDASEDD) form a linker region. The tract at residues 158–324 (FRRLFAQLAG…LISWLCFSVL (167 aa)) is domain IV. 16 residues coordinate Ca(2+): Ala-166, Asp-169, Glu-171, Glu-176, Asp-209, Asp-211, Ser-213, Lys-215, Glu-220, Asp-239, Asp-241, Ser-243, Thr-245, Glu-250, Asp-282, and Asn-285. 2 EF-hand domains span residues 190-224 (DIKS…FYIL) and 226-261 (TKIQ…AGFK).

This sequence belongs to the peptidase C2 family. As to quaternary structure, forms a heterodimer with a small (regulatory) subunit (CAPNS1). Interacts with CPEB3; this leads to cleavage of CPEB3. It depends on Ca(2+) as a cofactor. As to expression, ubiquitous.

It is found in the cytoplasm. It localises to the cell membrane. It carries out the reaction Broad endopeptidase specificity.. With respect to regulation, activated by 200-1000 micromolar concentrations of calcium and inhibited by calpastatin. Functionally, calcium-regulated non-lysosomal thiol-protease which catalyzes limited proteolysis of substrates involved in cytoskeletal remodeling and signal transduction. Proteolytically cleaves MYOC at 'Arg-226'. Proteolytically cleaves CPEB3 following neuronal stimulation which abolishes CPEB3 translational repressor activity, leading to translation of CPEB3 target mRNAs. This chain is Calpain-2 catalytic subunit (CAPN2), found in Sus scrofa (Pig).